An 88-amino-acid polypeptide reads, in one-letter code: Small ribosomal subunit protein uS17 (88 aa).

It belongs to the universal ribosomal protein uS17 family. Part of the 30S ribosomal subunit.

One of the primary rRNA binding proteins, it binds specifically to the 5'-end of 16S ribosomal RNA. In Lactobacillus helveticus (strain DPC 4571), this protein is Small ribosomal subunit protein uS17.